The chain runs to 407 residues: E3 ubiquitin-protein ligase TRIM13 (407 aa).

The RING-type zinc-finger motif lies at 10 to 58 (CPICCSLFDDPRVLPCSHNFCKKCLEGILEGSVRNSLWRPAPFKCPTCR). The B box-type zinc finger occupies 89–131 (PKMPVCKGHLGQPLNIFCLTDMQLICGICATRGEHTKHVFCSI). Residues cysteine 94, histidine 97, cysteine 117, and histidine 123 each coordinate Zn(2+). Residues 172-200 (LQLLTKDSDKVKEFFEKLQHTLDQKKNEI) adopt a coiled-coil conformation. A helical membrane pass occupies residues 317 to 337 (LFLLILLLGLVIVFGPTMFLE).

The protein belongs to the TRIM/RBCC family. As to quaternary structure, interacts (via C-terminal domain) with VCP. Interacts with AKT1; the interaction ubiquitinates AKT1 and leads to its proteasomal degradation. Interacts with MDM2; the interaction ubiquitinates AKT1 and leads to its proteasomal degradation. Interacts with p62/SQSTM1. Interacts with TRAF6. Interacts with IKBKG/NEMO. Auto-ubiquitinated; requires the RING-type zinc finger. Auto-polyubiquitination leads to proteasomal degradation.

It localises to the endoplasmic reticulum membrane. The catalysed reaction is S-ubiquitinyl-[E2 ubiquitin-conjugating enzyme]-L-cysteine + [acceptor protein]-L-lysine = [E2 ubiquitin-conjugating enzyme]-L-cysteine + N(6)-ubiquitinyl-[acceptor protein]-L-lysine.. The protein operates within protein modification; protein ubiquitination. Functionally, endoplasmic reticulum (ER) membrane anchored E3 ligase involved in the retrotranslocation and turnover of membrane and secretory proteins from the ER through a set of processes named ER-associated degradation (ERAD). This process acts on misfolded proteins as well as in the regulated degradation of correctly folded proteins. Enhances ionizing radiation-induced p53/TP53 stability and apoptosis via ubiquitinating MDM2 and AKT1 and decreasing AKT1 kinase activity through MDM2 and AKT1 proteasomal degradation. Regulates ER stress-induced autophagy, and may act as a tumor suppressor. Also plays a role in innate immune response by stimulating NF-kappa-B activity in the TLR2 signaling pathway. Ubiquitinates TRAF6 via the 'Lys-29'-linked polyubiquitination chain resulting in NF-kappa-B activation. Participates as well in T-cell receptor-mediated NF-kappa-B activation. In the presence of TNF, modulates the IKK complex by regulating IKBKG/NEMO ubiquitination leading to the repression of NF-kappa-B. This is E3 ubiquitin-protein ligase TRIM13 (TRIM13) from Homo sapiens (Human).